We begin with the raw amino-acid sequence, 237 residues long: Carboxy-S-adenosyl-L-methionine synthase (237 aa).

S-adenosyl-L-methionine contacts are provided by residues Y40, 65 to 67, 116 to 117, N131, and R194; these read GCS and DI.

It belongs to the class I-like SAM-binding methyltransferase superfamily. Cx-SAM synthase family. Homodimer.

It catalyses the reaction prephenate + S-adenosyl-L-methionine = carboxy-S-adenosyl-L-methionine + 3-phenylpyruvate + H2O. Catalyzes the conversion of S-adenosyl-L-methionine (SAM) to carboxy-S-adenosyl-L-methionine (Cx-SAM). The sequence is that of Carboxy-S-adenosyl-L-methionine synthase from Dichelobacter nodosus (strain VCS1703A).